Consider the following 105-residue polypeptide: Met repressor (105 aa).

Belongs to the MetJ family. In terms of assembly, homodimer.

The protein resides in the cytoplasm. This regulatory protein, when combined with SAM (S-adenosylmethionine) represses the expression of the methionine regulon and of enzymes involved in SAM synthesis. The protein is Met repressor of Serratia proteamaculans (strain 568).